Reading from the N-terminus, the 368-residue chain is 3-isopropylmalate dehydrogenase (368 aa).

79–91 (GPEWGTSSTVRPE) serves as a coordination point for NAD(+). Substrate-binding residues include Arg-98, Arg-108, Arg-137, and Asp-226. Mg(2+) is bound by residues Asp-226, Asp-251, and Asp-255. Residue 291–303 (GSAPDISGKGIVN) participates in NAD(+) binding.

The protein belongs to the isocitrate and isopropylmalate dehydrogenases family. Homodimer. Mg(2+) is required as a cofactor. The cofactor is Mn(2+).

The protein resides in the cytoplasm. It catalyses the reaction (2R,3S)-3-isopropylmalate + NAD(+) = 4-methyl-2-oxopentanoate + CO2 + NADH. Its pathway is amino-acid biosynthesis; L-leucine biosynthesis; L-leucine from 3-methyl-2-oxobutanoate: step 3/4. Its function is as follows. Catalyzes the oxidation of 3-carboxy-2-hydroxy-4-methylpentanoate (3-isopropylmalate) to 3-carboxy-4-methyl-2-oxopentanoate. The product decarboxylates to 4-methyl-2 oxopentanoate. This Neurospora crassa (strain ATCC 24698 / 74-OR23-1A / CBS 708.71 / DSM 1257 / FGSC 987) protein is 3-isopropylmalate dehydrogenase (leu-1).